We begin with the raw amino-acid sequence, 169 residues long: Gastrula zinc finger protein XlCGF62.1 (169 aa).

C2H2-type zinc fingers lie at residues 6–28, 34–56, 62–84, 90–113, 119–141, and 147–169; these read FICT…IRTH, FICT…YKTH, FICT…HRSH, FTCT…QAIH, FICT…KRTH, and FVCT…KRTH.

It belongs to the krueppel C2H2-type zinc-finger protein family.

It is found in the nucleus. Functionally, may be involved in transcriptional regulation. In Xenopus laevis (African clawed frog), this protein is Gastrula zinc finger protein XlCGF62.1.